We begin with the raw amino-acid sequence, 406 residues long: 4-hydroxy-3-methylbut-2-enyl diphosphate reductase (406 aa).

Cys66 serves as a coordination point for [4Fe-4S] cluster. His96 is a binding site for (2E)-4-hydroxy-3-methylbut-2-enyl diphosphate. His96 contributes to the dimethylallyl diphosphate binding site. Position 96 (His96) interacts with isopentenyl diphosphate. Cys157 contacts [4Fe-4S] cluster. Position 185 (His185) interacts with (2E)-4-hydroxy-3-methylbut-2-enyl diphosphate. His185 contributes to the dimethylallyl diphosphate binding site. His185 contacts isopentenyl diphosphate. Glu187 serves as the catalytic Proton donor. Thr250 lines the (2E)-4-hydroxy-3-methylbut-2-enyl diphosphate pocket. Cys288 contacts [4Fe-4S] cluster. Ser317, Ser318, Asn319, and Ser379 together coordinate (2E)-4-hydroxy-3-methylbut-2-enyl diphosphate. Dimethylallyl diphosphate is bound by residues Ser317, Ser318, Asn319, and Ser379. 4 residues coordinate isopentenyl diphosphate: Ser317, Ser318, Asn319, and Ser379.

This sequence belongs to the IspH family. The cofactor is [4Fe-4S] cluster.

The catalysed reaction is isopentenyl diphosphate + 2 oxidized [2Fe-2S]-[ferredoxin] + H2O = (2E)-4-hydroxy-3-methylbut-2-enyl diphosphate + 2 reduced [2Fe-2S]-[ferredoxin] + 2 H(+). It carries out the reaction dimethylallyl diphosphate + 2 oxidized [2Fe-2S]-[ferredoxin] + H2O = (2E)-4-hydroxy-3-methylbut-2-enyl diphosphate + 2 reduced [2Fe-2S]-[ferredoxin] + 2 H(+). The protein operates within isoprenoid biosynthesis; dimethylallyl diphosphate biosynthesis; dimethylallyl diphosphate from (2E)-4-hydroxy-3-methylbutenyl diphosphate: step 1/1. Its pathway is isoprenoid biosynthesis; isopentenyl diphosphate biosynthesis via DXP pathway; isopentenyl diphosphate from 1-deoxy-D-xylulose 5-phosphate: step 6/6. Functionally, catalyzes the conversion of 1-hydroxy-2-methyl-2-(E)-butenyl 4-diphosphate (HMBPP) into a mixture of isopentenyl diphosphate (IPP) and dimethylallyl diphosphate (DMAPP). Acts in the terminal step of the DOXP/MEP pathway for isoprenoid precursor biosynthesis. This chain is 4-hydroxy-3-methylbut-2-enyl diphosphate reductase, found in Synechococcus sp. (strain RCC307).